We begin with the raw amino-acid sequence, 235 residues long: Probable membrane-associated kinase regulator 6 (235 aa).

Residues 108-140 (SAATEEESEPLDTTTSEKIDTRGLNSKPSPTSS) are disordered. The segment covering 130–140 (GLNSKPSPTSS) has biased composition (polar residues).

The protein localises to the cell membrane. Functionally, may be involved in abscisic acid signaling by acting as a kinase regulator. The chain is Probable membrane-associated kinase regulator 6 (MAKR6) from Arabidopsis thaliana (Mouse-ear cress).